Consider the following 399-residue polypeptide: Nicotinate phosphoribosyltransferase (399 aa).

His-224 carries the phosphohistidine; by autocatalysis modification.

The protein belongs to the NAPRTase family. Transiently phosphorylated on a His residue during the reaction cycle. Phosphorylation strongly increases the affinity for substrates and increases the rate of nicotinate D-ribonucleotide production. Dephosphorylation regenerates the low-affinity form of the enzyme, leading to product release.

It catalyses the reaction nicotinate + 5-phospho-alpha-D-ribose 1-diphosphate + ATP + H2O = nicotinate beta-D-ribonucleotide + ADP + phosphate + diphosphate. It participates in cofactor biosynthesis; NAD(+) biosynthesis; nicotinate D-ribonucleotide from nicotinate: step 1/1. Catalyzes the synthesis of beta-nicotinate D-ribonucleotide from nicotinate and 5-phospho-D-ribose 1-phosphate at the expense of ATP. The chain is Nicotinate phosphoribosyltransferase from Ectopseudomonas mendocina (strain ymp) (Pseudomonas mendocina).